We begin with the raw amino-acid sequence, 390 residues long: Galactokinase (390 aa).

Residue 34–37 (EHTD) participates in substrate binding. Residues serine 68 and 122 to 128 (GSGLSSS) each bind ATP. Positions 128 and 160 each coordinate Mg(2+). The Proton acceptor role is filled by aspartate 172. Tyrosine 221 serves as a coordination point for substrate.

It belongs to the GHMP kinase family. GalK subfamily.

It is found in the cytoplasm. The catalysed reaction is alpha-D-galactose + ATP = alpha-D-galactose 1-phosphate + ADP + H(+). It participates in carbohydrate metabolism; galactose metabolism. In terms of biological role, catalyzes the transfer of the gamma-phosphate of ATP to D-galactose to form alpha-D-galactose-1-phosphate (Gal-1-P). This Chloroflexus aggregans (strain MD-66 / DSM 9485) protein is Galactokinase.